The chain runs to 500 residues: Aspartyl/glutamyl-tRNA(Asn/Gln) amidotransferase subunit B (500 aa).

The protein belongs to the GatB/GatE family. GatB subfamily. As to quaternary structure, heterotrimer of A, B and C subunits.

It carries out the reaction L-glutamyl-tRNA(Gln) + L-glutamine + ATP + H2O = L-glutaminyl-tRNA(Gln) + L-glutamate + ADP + phosphate + H(+). The catalysed reaction is L-aspartyl-tRNA(Asn) + L-glutamine + ATP + H2O = L-asparaginyl-tRNA(Asn) + L-glutamate + ADP + phosphate + 2 H(+). Functionally, allows the formation of correctly charged Asn-tRNA(Asn) or Gln-tRNA(Gln) through the transamidation of misacylated Asp-tRNA(Asn) or Glu-tRNA(Gln) in organisms which lack either or both of asparaginyl-tRNA or glutaminyl-tRNA synthetases. The reaction takes place in the presence of glutamine and ATP through an activated phospho-Asp-tRNA(Asn) or phospho-Glu-tRNA(Gln). This Clavibacter sepedonicus (Clavibacter michiganensis subsp. sepedonicus) protein is Aspartyl/glutamyl-tRNA(Asn/Gln) amidotransferase subunit B.